Reading from the N-terminus, the 309-residue chain is Transcriptional regulator HilD (309 aa).

The region spanning Glu209–Met306 is the HTH araC/xylS-type domain. 2 consecutive DNA-binding regions (H-T-H motif) follow at residues Thr226–Gly247 and Val273–Phe296.

In Salmonella typhimurium (strain SL1344), this protein is Transcriptional regulator HilD (hilD).